A 272-amino-acid chain; its full sequence is Carbonic anhydrase (272 aa).

Positions 39, 98, and 101 each coordinate Zn(2+).

This sequence belongs to the beta-class carbonic anhydrase family. A hexamer formed by a trimer of dimers. Purified from carboxysomes with the both RuBisCO subunits and the full-length form of CcmM, probably interacts with the N-terminus of CcmM. Zn(2+) serves as cofactor.

It localises to the carboxysome. It carries out the reaction hydrogencarbonate + H(+) = CO2 + H2O. Functionally, reversible hydration of carbon dioxide. Essential to photosynthetic carbon dioxide fixation, supplies CO(2) to RuBisCO (ribulose bisphosphate carboxylase, rbcL-rbcS) in the carboxysome. Loss of activity results in limitation of CO(2) availability to RuBisCO located in the cytoplasm. In Synechococcus elongatus (strain ATCC 33912 / PCC 7942 / FACHB-805) (Anacystis nidulans R2), this protein is Carbonic anhydrase.